A 1755-amino-acid polypeptide reads, in one-letter code: Transposon Ty1-ML2 Gag-Pol polyprotein (1755 aa).

A compositionally biased stretch (low complexity) spans 1–16 (MESQQLSQHSHISHGS). Disordered regions lie at residues 1–93 (MESQ…MMTQ), 126–173 (PQSQ…RPPP), and 352–421 (GSRN…SKST). Polar residues-rich tracts occupy residues 48 to 60 (TKAN…TPAS) and 127 to 152 (QSQF…GNTF). Residues 153–165 (TDSSSADSDMTST) are compositionally biased toward low complexity. The segment at 299 to 401 (NNGIHINNKV…NSKSKTARAH (103 aa)) is RNA-binding. A compositionally biased stretch (low complexity) spans 402 to 418 (NVSTSNNSPSTDNDSIS). Ser-416 carries the phosphoserine modification. Residue Asp-461 is the For protease activity; shared with dimeric partner of the active site. Residues 583-640 (NVHTSESTRKYPYPFIHRMLAHANAQTIRYSLKNNTITYFNESDVDRSSAIDYQCPDC) form an integrase-type zinc finger-like region. An Integrase catalytic domain is found at 660–835 (NSYEPFQYLH…AGLDISTLLP (176 aa)). Positions 671 and 736 each coordinate Mg(2+). 3 disordered regions span residues 956 to 1087 (SKAV…ETEK), 1092 to 1111 (RSPS…NIVP), and 1130 to 1171 (DLPL…DSNA). The span at 960-969 (SPTDSTPPST) shows a compositional bias: low complexity. The segment covering 1005 to 1015 (STPQISNIEST) has biased composition (polar residues). Positions 1038-1053 (ESSHASKSKDFRHSDS) are enriched in basic and acidic residues. 2 stretches are compositionally biased toward polar residues: residues 1054–1082 (YSEN…QISD) and 1101–1111 (PENNSSHNIVP). A Bipartite nuclear localization signal motif is present at residues 1178–1212 (KKRSLEDNETEIKVSRDTWNTKNMRSLEPPRSKKR). The Reverse transcriptase Ty1/copia-type domain maps to 1338–1476 (NNYYITQLDI…DILGLEIKYQ (139 aa)). Mg(2+) contacts are provided by Asp-1346, Asp-1427, Asp-1428, Asp-1610, Glu-1652, and Asp-1685. Residues 1610 to 1752 (DASYGNQPYY…IKTFKLLTNK (143 aa)) form the RNase H Ty1/copia-type domain.

As to quaternary structure, the capsid protein forms a homotrimer, from which the VLPs are assembled. The protease is a homodimer, whose active site consists of two apposed aspartic acid residues. In terms of processing, initially, virus-like particles (VLPs) are composed of the structural unprocessed proteins Gag and Gag-Pol, and also contain the host initiator methionine tRNA (tRNA(i)-Met) which serves as a primer for minus-strand DNA synthesis, and a dimer of genomic Ty RNA. Processing of the polyproteins occurs within the particle and proceeds by an ordered pathway, called maturation. First, the protease (PR) is released by autocatalytic cleavage of the Gag-Pol polyprotein yielding capsid protein p45 and a Pol-p154 precursor protein. This cleavage is a prerequisite for subsequent processing of Pol-p154 at the remaining sites to release the mature structural and catalytic proteins. Maturation takes place prior to the RT reaction and is required to produce transposition-competent VLPs.

It localises to the cytoplasm. It is found in the nucleus. It carries out the reaction DNA(n) + a 2'-deoxyribonucleoside 5'-triphosphate = DNA(n+1) + diphosphate. The enzyme catalyses Endonucleolytic cleavage to 5'-phosphomonoester.. In terms of biological role, capsid protein (CA) is the structural component of the virus-like particle (VLP), forming the shell that encapsulates the retrotransposons dimeric RNA genome. The particles are assembled from trimer-clustered units and there are holes in the capsid shells that allow for the diffusion of macromolecules. CA also has nucleocapsid-like chaperone activity, promoting primer tRNA(i)-Met annealing to the multipartite primer-binding site (PBS), dimerization of Ty1 RNA and initiation of reverse transcription. Functionally, the aspartyl protease (PR) mediates the proteolytic cleavages of the Gag and Gag-Pol polyproteins after assembly of the VLP. Reverse transcriptase/ribonuclease H (RT) is a multifunctional enzyme that catalyzes the conversion of the retro-elements RNA genome into dsDNA within the VLP. The enzyme displays a DNA polymerase activity that can copy either DNA or RNA templates, and a ribonuclease H (RNase H) activity that cleaves the RNA strand of RNA-DNA heteroduplexes during plus-strand synthesis and hydrolyzes RNA primers. The conversion leads to a linear dsDNA copy of the retrotransposon that includes long terminal repeats (LTRs) at both ends. Its function is as follows. Integrase (IN) targets the VLP to the nucleus, where a subparticle preintegration complex (PIC) containing at least integrase and the newly synthesized dsDNA copy of the retrotransposon must transit the nuclear membrane. Once in the nucleus, integrase performs the integration of the dsDNA into the host genome. The sequence is that of Transposon Ty1-ML2 Gag-Pol polyprotein (TY1B-ML2) from Saccharomyces cerevisiae (strain ATCC 204508 / S288c) (Baker's yeast).